The chain runs to 320 residues: Pseudouridine-5'-phosphate glycosidase (320 aa).

E25 serves as the catalytic Proton donor. The substrate site is built by K85 and V105. A Mn(2+)-binding site is contributed by D137. A substrate-binding site is contributed by 139–141 (SAD). The active-site Nucleophile is K158.

It belongs to the pseudouridine-5'-phosphate glycosidase family. In terms of assembly, homotrimer. Requires Mn(2+) as cofactor.

The enzyme catalyses D-ribose 5-phosphate + uracil = psi-UMP + H2O. Functionally, catalyzes the reversible cleavage of pseudouridine 5'-phosphate (PsiMP) to ribose 5-phosphate and uracil. Functions biologically in the cleavage direction, as part of a pseudouridine degradation pathway. In Rhodospirillum centenum (strain ATCC 51521 / SW), this protein is Pseudouridine-5'-phosphate glycosidase.